The following is a 1475-amino-acid chain: Peroxidasin homolog (1475 aa).

The signal sequence occupies residues 1–23 (MAVRPTRRCLLALLLCFAWWAMA). The LRRNT domain maps to 24–60 (VVASKQGAGCPSRCLCFRTTVRCMHLLLEAVPAVAPQ). 2 disulfides stabilise this stretch: C33–C39 and C37–C46. LRR repeat units lie at residues 58 to 81 (APQT…AFRR), 82 to 105 (LRSL…AFED), 107 to 129 (ENLK…AFKG), 130 to 153 (LASL…SFQH), 154 to 177 (LPKL…TFSQ), and 179 to 201 (ESMK…LWLA). Residues 189–241 (NALHCDCEILWLADLLKTYAQSGNAQAAATCEYPRRIQGRSVATITPEELNCE) enclose the LRRCT domain. Disulfide bonds link C193-C240, C195-C219, C264-C314, C360-C409, C451-C499, and C543-C591. 4 Ig-like C2-type domains span residues 243–329 (PRIT…QEVT), 339–425 (PTFV…AFII), 430–517 (PQFT…LTVQ), and 518–607 (PRVT…MVLS). A glycan (N-linked (GlcNAc...) asparagine) is linked at N387. The LRR 7 repeat unit spans residues 402 to 425 (SDSGEYTCFASNSVDSIHATAFII). Residues N637, N696, N716, and N728 are each glycosylated (N-linked (GlcNAc...) asparagine). Intrachain disulfides connect C720-C882, C729-C745, C844-C854, and C848-C872. D823 contacts heme b. The active-site Proton acceptor is the H824. Position 825 (D825) interacts with Ca(2+). 4 residues coordinate Ca(2+): T904, Y906, D908, and S910. A disulfide bridge connects residues C956 and C967. N961 carries N-linked (GlcNAc...) asparagine glycosylation. Heme b-binding residues include E977 and H1071. The LRR 8 repeat unit spans residues 1148 to 1172 (ALDLAAINIQRGRDHGIPPYHDYRV). At Y1173 the chain carries Phosphotyrosine. 2 disulfide bridges follow: C1174–C1231 and C1272–C1298. A glycan (N-linked (GlcNAc...) asparagine) is linked at N1175. At S1177 the chain carries Phosphoserine. Residues 1267–1288 (LARILCDNSDNITRVQQDVFRV) form an LRR 9 repeat. N1277 and N1364 each carry an N-linked (GlcNAc...) asparagine glycan. The tract at residues 1312–1407 (CCEDCRTRGQ…QINSLESRLS (96 aa)) is required in homotrimerization. Positions 1409 to 1467 (TECVDDSGESHGGNTKWKKDPCTVCECKNGQITCFVEACQPAACPQPVKVEGACCPVCL) constitute a VWFC domain.

Belongs to the peroxidase family. XPO subfamily. In terms of assembly, homotrimer; disulfide-linked. The homotrimer form is predominant. Homooligomer; disulfide-linked. Oligomerization occurs intracellularly before C-terminal proteolytic cleavage. Interacts with PXDNL; this interaction inhibits the peroxidase activity of PXDN. Ca(2+) is required as a cofactor. The cofactor is heme b. In terms of processing, processed by FURIN and the proteolytic processing largely depends on the peroxidase activity of PXDN. The proteolytic cleavage occurs after intracellular homotrimerization and releases into the extracellular matrix a large, catalytically active fragment and a smaller fragment consisting primarily of the C-terminal VWFC domain. The processing enhances both peroxidase activity and sulfilimine cross-links formation. In terms of tissue distribution, highly expressed in the cardiovascular system. In the embryo, expressed in the corneal epithelial layer. In the adult eyes, expressed in the corneal and lens epithelium. Expressed in lung.

The protein localises to the secreted. Its subcellular location is the extracellular space. The protein resides in the extracellular matrix. It is found in the endoplasmic reticulum. It localises to the cell surface. The protein localises to the basement membrane. The enzyme catalyses L-lysyl-[collagen] + L-methionyl-[collagen] + H2O2 = [collagen]-L-lysyl-N-S-L-methionyl-[collagen] + 2 H2O + H(+). The catalysed reaction is bromide + H2O2 = hypobromite + H2O. It catalyses the reaction L-lysyl-[collagen] + L-methionyl-[collagen] + hypobromite = [collagen]-L-lysyl-N-S-L-methionyl-[collagen] + bromide + H2O + H(+). It carries out the reaction (5R)-5-hydroxy-L-lysyl-[collagen] + L-methionyl-[collagen] + hypobromite = [collagen]-(5R)-5-hydroxy-L-lysyl-N-S-L-methionyl-[collagen] + bromide + H2O + H(+). The enzyme catalyses (5R)-5-hydroxy-L-lysyl-[collagen] + L-methionyl-[collagen] + H2O2 = [collagen]-(5R)-5-hydroxy-L-lysyl-N-S-L-methionyl-[collagen] + 2 H2O + H(+). The catalysed reaction is L-tyrosyl-[protein] + bromide + H2O2 + H(+) = 3-bromo-L-tyrosyl-[protein] + 2 H2O. It catalyses the reaction hypobromite + L-tyrosyl-[protein] + H(+) = 3-bromo-L-tyrosyl-[protein] + H2O. Its activity is regulated as follows. Thiocyanate inhibits the formation of 3-bromotyrosine. Functionally, catalyzes the two-electron oxidation of bromide by hydrogen peroxide and generates hypobromite as a reactive intermediate which mediates the formation of sulfilimine cross-links between methionine and hydroxylysine residues within an uncross-linked collagen IV/COL4A1 NC1 hexamer. In turns, directly contributes to the collagen IV network-dependent fibronectin/FN and laminin assembly, which is required for full extracellular matrix (ECM)-mediated signaling. Thus, sulfilimine cross-links are essential for growth factor-induced cell proliferation and survival in endothelial cells, an event essential to basement membrane integrity. In addition, through the bromide oxidation, may promote tubulogenesis and induce angiogenesis through ERK1/2, Akt, and FAK pathways. Moreover brominates alpha2 collagen IV chain/COL4A2 at 'Tyr-1480' and leads to bromine enrichment of the basement membranes. In vitro, can also catalyze the two-electron oxidation of thiocyanate and iodide and these two substrates could effectively compete with bromide and thus inhibit the formation of sulfilimine bonds. Binds laminins. May play a role in the organization of eyeball structure and lens development during eye development. This chain is Peroxidasin homolog, found in Mus musculus (Mouse).